The sequence spans 883 residues: Glutamate receptor 2 (883 aa).

A signal peptide spans 1 to 24; it reads MQKIMHISVLLSPVLWGLIFGVSS. The Extracellular segment spans residues 25 to 543; that stretch reads NSIQIGGLFP…GVFSFLDPLA (519 aa). Cys-78 and Cys-330 form a disulfide bridge. N-linked (GlcNAc...) asparagine glycans are attached at residues Asn-256, Asn-370, Asn-406, and Asn-413. Residues Pro-499, Thr-501, and Arg-506 each coordinate L-glutamate. The helical transmembrane segment at 544–564 threads the bilayer; that stretch reads YEIWMCIVFAYIGVSVVLFLV. Topologically, residues 565-591 are cytoplasmic; sequence SRFSPYEWHTEEFEDGRETQSSESTNE. The segment at residues 592–607 is an intramembrane region (helical; Pore-forming); it reads FGIFNSLWFSLGAFMQ. Residues 608–610 lie within the membrane without spanning it; it reads QGC. Cys-610 carries the S-palmitoyl cysteine lipid modification. The Cytoplasmic segment spans residues 611–616; the sequence is DISPRS. Residues 617 to 637 form a helical membrane-spanning segment; that stretch reads LSGRIVGGVWWFFTLIIISSY. At 638–812 the chain is on the extracellular side; the sequence is TANLAAFLTV…EKTSALSLSN (175 aa). L-glutamate-binding residues include Ser-675 and Thr-676. The residue at position 683 (Ser-683) is a Phosphoserine; by PKC. Ser-717 is subject to Phosphoserine; by PKG. Glu-726 contacts L-glutamate. A disulfide bridge connects residues Cys-739 and Cys-794. Residues 813–833 traverse the membrane as a helical segment; it reads VAGVFYILVGGLGLAMLVALI. Residues 834–883 are Cytoplasmic-facing; that stretch reads EFCYKSRAEAKRMKVAKNAQNINPSSSQNSQNFATYKEGYNVYGIESVKI. Cys-836 carries the S-palmitoyl cysteine lipid modification. Phosphoserine occurs at positions 860 and 863. The interval 867–877 is required for interaction with IQSEC1; it reads ATYKEGYNVYG. The residue at position 876 (Tyr-876) is a Phosphotyrosine. Ser-880 carries the post-translational modification Phosphoserine.

It belongs to the glutamate-gated ion channel (TC 1.A.10.1) family. GRIA2 subfamily. Homotetramer or heterotetramer of pore-forming glutamate receptor subunits. Tetramers may be formed by the dimerization of dimers. May interact with MPP4. Forms a ternary complex with GRIP1 and CSPG4. Interacts with ATAD1 in an ATP-dependent manner. ATAD1-catalyzed ATP hydrolysis disrupts binding to ATAD1 and to GRIP1 and leads to AMPAR complex disassembly. Interacts with GRIP1 and GRIP2. Interacts with NSF via its C-terminus. Isoform 1, but not isoform 3, interacts with PICK1. Interacts with CACNG2. Interacts with GRIA1 and SYNDIG1. Part of a complex containing GRIA2, NSF and NAPA and/or NAPB. Interacts with SNX27 (via PDZ domain); the interaction is required for recycling to the plasma membrane when endocytosed and prevent degradation in lysosomes. Interacts with LRFN1. Found in a complex with GRIA1, GRIA3, GRIA4, CNIH2, CNIH3, CACNG2, CACNG3, CACNG4, CACNG5, CACNG7 and CACNG8. Interacts with CACNG5. Interacts with OLFM2. Interacts with AP4B1, AP4E1 and AP4M1; probably indirect it mediates the somatodendritic localization of GRIA2 in neurons. Forms a complex with GRIP1, NSG1 and STX12; controls the intracellular fate of AMPAR and the endosomal sorting of the GRIA2 subunit toward recycling and membrane targeting. Interacts with IQSEC1; the interaction is required for ARF6 activation. Interacts (heterotetramer form) with CNIH2 and CNIH3; this interaction promotes expression at the plasma membrane and extensively modulates their gating properties by slowing deactivation and desensitization kinetics. In terms of processing, palmitoylated. Depalmitoylated upon L-glutamate stimulation. ZDHHC3/GODZ specifically palmitoylates Cys-610, which leads to Golgi retention and decreased cell surface expression. In contrast, Cys-836 palmitoylation does not affect cell surface expression but regulates stimulation-dependent endocytosis. N-glycosylated. Post-translationally, ubiquitinated by RNF167, leading to its degradation. In terms of processing, phosphorylation at Tyr-876 is required for interaction with IQSEC1 and ARF6 activation, which in turn triggers AMPAR internalization for persistent synaptic depression. In terms of tissue distribution, detected in brain cortex, hippocampus and cerebellum (at protein level). Detected in hippocampus.

The protein resides in the cell membrane. It localises to the postsynaptic cell membrane. The protein localises to the postsynaptic density membrane. It catalyses the reaction Ca(2+)(in) = Ca(2+)(out). The enzyme catalyses Na(+)(in) = Na(+)(out). Functionally, ionotropic glutamate receptor that functions as a ligand-gated cation channel, gated by L-glutamate and glutamatergic agonists such as alpha-amino-3-hydroxy-5-methyl-4-isoxazolepropionic acid (AMPA), quisqualic acid, and kainic acid. L-glutamate acts as an excitatory neurotransmitter at many synapses in the central nervous system and plays an important role in fast excitatory synaptic transmission. Binding of the excitatory neurotransmitter L-glutamate induces a conformation change, leading to the opening of the cation channel, and thereby converts the chemical signal to an electrical impulse upon entry of monovalent and divalent cations such as sodium and calcium. The receptor then desensitizes rapidly and enters in a transient inactive state, characterized by the presence of bound agonist. In the presence of CACNG4 or CACNG7 or CACNG8, shows resensitization which is characterized by a delayed accumulation of current flux upon continued application of L-glutamate. Through complex formation with NSG1, GRIP1 and STX12 controls the intracellular fate of AMPAR and the endosomal sorting of the GRIA2 subunit toward recycling and membrane targeting. This Mus musculus (Mouse) protein is Glutamate receptor 2.